The sequence spans 1189 residues: Lysine-specific demethylase hairless (1189 aa).

Disordered regions lie at residues methionine 1–proline 40, histidine 236–alanine 257, glutamate 349–threonine 377, alanine 414–proline 480, and glycine 505–threonine 552. Over residues arginine 239–glutamate 254 the composition is skewed to basic and acidic residues. Residues lysine 457 to glycine 469 show a composition bias toward basic and acidic residues. The LXXLL motif 1 motif lies at leucine 566–leucine 570. The segment at cysteine 600–cysteine 625 adopts a C6-type zinc-finger fold. Residues glycine 702–arginine 750 form a disordered region. A compositionally biased stretch (basic and acidic residues) spans aspartate 725 to threonine 736. The short motif at leucine 758–leucine 762 is the LXXLL motif 2 element. The 212-residue stretch at aspartate 946–proline 1157 folds into the JmjC domain. Positions 1007, 1009, and 1125 each coordinate Fe cation.

The cofactor is Fe(2+). In terms of tissue distribution, strongest expression of isoforms 1 and 2 is seen in the small intestine, weaker expression in brain and colon, and trace expression is found in liver, pancreas, spleen, thymus, stomach, salivary gland, appendix and trachea. Isoform 1 is always the most abundant. Isoform 1 is exclusively expressed at low levels in kidney and testis. Isoform 2 is exclusively expressed at high levels in the skin.

It is found in the nucleus. The enzyme catalyses N(6),N(6)-dimethyl-L-lysyl(9)-[histone H3] + 2 2-oxoglutarate + 2 O2 = L-lysyl(9)-[histone H3] + 2 formaldehyde + 2 succinate + 2 CO2. Functionally, histone demethylase that specifically demethylates both mono- and dimethylated 'Lys-9' of histone H3. May act as a transcription regulator controlling hair biology (via targeting of collagens), neural activity, and cell cycle. The sequence is that of Lysine-specific demethylase hairless (HR) from Homo sapiens (Human).